Reading from the N-terminus, the 265-residue chain is Hydroxyethylthiazole kinase (265 aa).

Residue Met-43 coordinates substrate. Positions 118 and 165 each coordinate ATP. Gly-192 provides a ligand contact to substrate.

Belongs to the Thz kinase family. Mg(2+) serves as cofactor.

The enzyme catalyses 5-(2-hydroxyethyl)-4-methylthiazole + ATP = 4-methyl-5-(2-phosphooxyethyl)-thiazole + ADP + H(+). It participates in cofactor biosynthesis; thiamine diphosphate biosynthesis; 4-methyl-5-(2-phosphoethyl)-thiazole from 5-(2-hydroxyethyl)-4-methylthiazole: step 1/1. Functionally, catalyzes the phosphorylation of the hydroxyl group of 4-methyl-5-beta-hydroxyethylthiazole (THZ). The sequence is that of Hydroxyethylthiazole kinase from Pyrococcus furiosus (strain ATCC 43587 / DSM 3638 / JCM 8422 / Vc1).